A 239-amino-acid chain; its full sequence is Ribosomal RNA small subunit methyltransferase G (239 aa).

S-adenosyl-L-methionine-binding positions include glycine 78, phenylalanine 83, 129–130 (AE), and arginine 148.

The protein belongs to the methyltransferase superfamily. RNA methyltransferase RsmG family.

The protein resides in the cytoplasm. Its function is as follows. Specifically methylates the N7 position of a guanine in 16S rRNA. This is Ribosomal RNA small subunit methyltransferase G from Clostridium perfringens (strain 13 / Type A).